The primary structure comprises 170 residues: Crossover junction endodeoxyribonuclease RuvC (170 aa).

Active-site residues include Asp-11, Glu-71, and Asp-143. Mg(2+) contacts are provided by Asp-11, Glu-71, and Asp-143.

This sequence belongs to the RuvC family. Homodimer which binds Holliday junction (HJ) DNA. The HJ becomes 2-fold symmetrical on binding to RuvC with unstacked arms; it has a different conformation from HJ DNA in complex with RuvA. In the full resolvosome a probable DNA-RuvA(4)-RuvB(12)-RuvC(2) complex forms which resolves the HJ. Requires Mg(2+) as cofactor.

The protein resides in the cytoplasm. It carries out the reaction Endonucleolytic cleavage at a junction such as a reciprocal single-stranded crossover between two homologous DNA duplexes (Holliday junction).. The RuvA-RuvB-RuvC complex processes Holliday junction (HJ) DNA during genetic recombination and DNA repair. Endonuclease that resolves HJ intermediates. Cleaves cruciform DNA by making single-stranded nicks across the HJ at symmetrical positions within the homologous arms, yielding a 5'-phosphate and a 3'-hydroxyl group; requires a central core of homology in the junction. The consensus cleavage sequence is 5'-(A/T)TT(C/G)-3'. Cleavage occurs on the 3'-side of the TT dinucleotide at the point of strand exchange. HJ branch migration catalyzed by RuvA-RuvB allows RuvC to scan DNA until it finds its consensus sequence, where it cleaves and resolves the cruciform DNA. In Agrobacterium fabrum (strain C58 / ATCC 33970) (Agrobacterium tumefaciens (strain C58)), this protein is Crossover junction endodeoxyribonuclease RuvC.